The primary structure comprises 58 residues: Small integral membrane protein 11 (58 aa).

The helical transmembrane segment at 9-29 (FPLLLYILAAKTLILCLAFAG) threads the bilayer. The stretch at 29–58 (GVKVYQRKRLEAKQQKVEAEKRKQAEKKES) forms a coiled coil.

The protein localises to the membrane. This chain is Small integral membrane protein 11 (SMIM11), found in Bos taurus (Bovine).